The following is a 598-amino-acid chain: Aspartate--tRNA ligase (598 aa).

Glu175 provides a ligand contact to L-aspartate. The segment at 199–202 is aspartate; that stretch reads QLFK. Arg221 provides a ligand contact to L-aspartate. Residues 221–223 and Gln230 each bind ATP; that span reads RDE. Residue His450 participates in L-aspartate binding. Glu486 contributes to the ATP binding site. Arg493 is an L-aspartate binding site. ATP is bound at residue 538–541; that stretch reads GLDR.

This sequence belongs to the class-II aminoacyl-tRNA synthetase family. Type 1 subfamily. As to quaternary structure, homodimer.

It localises to the cytoplasm. The catalysed reaction is tRNA(Asp) + L-aspartate + ATP = L-aspartyl-tRNA(Asp) + AMP + diphosphate. Its function is as follows. Catalyzes the attachment of L-aspartate to tRNA(Asp) in a two-step reaction: L-aspartate is first activated by ATP to form Asp-AMP and then transferred to the acceptor end of tRNA(Asp). In Lactiplantibacillus plantarum (strain ATCC BAA-793 / NCIMB 8826 / WCFS1) (Lactobacillus plantarum), this protein is Aspartate--tRNA ligase.